A 373-amino-acid polypeptide reads, in one-letter code: MFLNGQGGQRPPTVASPPLNVRGSISSDFNALGRSRNNSDAMDIYTITDRGPAAERDPAAGRWHANGSPSINSTSSKNPDRYPCYQENGRTYHGYRKGIYMLPCDEQEQDRLDIFHKLFTVARVSDGLIYAPHPTNGRFLDLGCGTGIWAIDVANKYPEAFVVGVDLAPIQPPNHPRNCDFYAPFDFESLWALGEDSWDLIHMQMGSGSVASWPNLYRRIYSHLRPGAWFEQVEIDFEPRCDDRSLEGLAIRQWYQLLKQATEETMRPVAHNSRETIRNLQEAGFTEIDHQMVGLPLNPWHQDEHERRVARWYNLAISESIETMSLAPFSRVFGWPIERIKQIAADVKSEAFNKEIHTYNILHIYQARKPLAN.

2 disordered regions span residues 1–21 (MFLN…PLNV) and 53–81 (AAER…NPDR). Positions 67–77 (GSPSINSTSSK) are enriched in polar residues.

This sequence belongs to the methyltransferase superfamily. LaeA methyltransferase family. As to quaternary structure, component of the heterotrimeric velvet complex composed of laeA, veA and velB; VeA acting as a bridging protein between laeA and velB.

The protein resides in the nucleus. The catalysed reaction is L-methionyl-[protein] + S-adenosyl-L-methionine = S-methyl-L-methionyl-[protein] + S-adenosyl-L-homocysteine. Functionally, methyltransferase that performs automethylation. No other methyl-accepting substrate has been identified yet. Component of the velvet transcription factor complex that acts as a global regulator for secondary metabolite gene expression. Controls the expression of the cyclopiazonic acid (CPA) gene clusters. Regulates also pigmentation and conidial head morphology. This Aspergillus fumisynnematus protein is Secondary metabolism regulator laeA.